Reading from the N-terminus, the 285-residue chain is Eukaryotic translation initiation factor 3 subunit F-2 (285 aa).

One can recognise an MPN domain in the interval 11 to 145 (VYLKPLVFFQ…TRLYCAVEMG (135 aa)).

The protein belongs to the eIF-3 subunit F family. In terms of assembly, component of the eukaryotic translation initiation factor 3 (eIF-3) complex. The eIF-3 complex interacts with pix.

It is found in the cytoplasm. In terms of biological role, component of the eukaryotic translation initiation factor 3 (eIF-3) complex, which is involved in protein synthesis of a specialized repertoire of mRNAs and, together with other initiation factors, stimulates binding of mRNA and methionyl-tRNAi to the 40S ribosome. The eIF-3 complex specifically targets and initiates translation of a subset of mRNAs involved in cell proliferation. The polypeptide is Eukaryotic translation initiation factor 3 subunit F-2 (Drosophila melanogaster (Fruit fly)).